The sequence spans 100 residues: Conantokin-G (100 aa).

Positions 1-21 (MHLYTYLYLLVPLVTFHLILG) are cleaved as a signal peptide. Residues 22 to 80 (TGTLDDGGALTERRSADATALKAEPVLLQKSAARSTDDNGKDRLTQMKRILKQRGNKAR) constitute a propeptide that is removed on maturation. The disordered stretch occupies residues 52–100 (SAARSTDDNGKDRLTQMKRILKQRGNKARGEEELQENQELIREKSNGKR). A compositionally biased stretch (basic and acidic residues) spans 56-66 (STDDNGKDRLT). A gamma-carboxylation recognition sequence that plays a role in the conversion of Glu to carboxy-Glu (Gla) region spans residues 61–80 (GKDRLTQMKRILKQRGNKAR). Glu-83 lines the a divalent metal cation pocket. 4-carboxyglutamate is present on residues Glu-83, Glu-84, Glu-87, Glu-90, and Glu-94. A divalent metal cation-binding residues include Glu-87, Glu-90, and Glu-94. Over residues 90-100 (ELIREKSNGKR) the composition is skewed to basic and acidic residues. Asparagine amide is present on Asn-97.

Belongs to the conotoxin B superfamily. Ca(2+) is required as a cofactor. Requires Mg(2+) as cofactor. As to expression, expressed by the venom duct.

The protein resides in the secreted. Its function is as follows. Conantokins inhibit N-methyl-D-aspartate (NMDA) receptors. This toxin is selective for the NR2B/GRIN2B subunit. Induces sleep-like symptoms in young mice and hyperactivity in older mice. This is Conantokin-G from Conus geographus (Geography cone).